Reading from the N-terminus, the 71-residue chain is Large ribosomal subunit protein bL31 (71 aa).

Residues Cys-16, Cys-18, Cys-37, and Cys-40 each coordinate Zn(2+).

The protein belongs to the bacterial ribosomal protein bL31 family. Type A subfamily. In terms of assembly, part of the 50S ribosomal subunit. It depends on Zn(2+) as a cofactor.

Functionally, binds the 23S rRNA. In Marinomonas sp. (strain MWYL1), this protein is Large ribosomal subunit protein bL31.